Reading from the N-terminus, the 427-residue chain is Adenylosuccinate synthetase (427 aa).

Residues 12–18 (GDEGKGK) and 40–42 (GHT) each bind GTP. Catalysis depends on Asp-13, which acts as the Proton acceptor. Mg(2+) is bound by residues Asp-13 and Gly-40. Residues 13 to 16 (DEGK), 38 to 41 (NAGH), Thr-128, Arg-142, Gln-223, Thr-238, and Arg-302 contribute to the IMP site. His-41 acts as the Proton donor in catalysis. 298-304 (TTTGRPR) contributes to the substrate binding site. Residues Arg-304, 330–332 (KLD), and 412–414 (AVG) contribute to the GTP site.

The protein belongs to the adenylosuccinate synthetase family. As to quaternary structure, homodimer. The cofactor is Mg(2+).

The protein resides in the cytoplasm. It catalyses the reaction IMP + L-aspartate + GTP = N(6)-(1,2-dicarboxyethyl)-AMP + GDP + phosphate + 2 H(+). The protein operates within purine metabolism; AMP biosynthesis via de novo pathway; AMP from IMP: step 1/2. Functionally, plays an important role in the de novo pathway of purine nucleotide biosynthesis. Catalyzes the first committed step in the biosynthesis of AMP from IMP. The protein is Adenylosuccinate synthetase of Heliobacterium modesticaldum (strain ATCC 51547 / Ice1).